Reading from the N-terminus, the 189-residue chain is Peptidyl-tRNA hydrolase (189 aa).

Tyr16 provides a ligand contact to tRNA. His21 functions as the Proton acceptor in the catalytic mechanism. Residues Phe67, Asn69, and Asn115 each contribute to the tRNA site.

Belongs to the PTH family. As to quaternary structure, monomer.

It localises to the cytoplasm. The enzyme catalyses an N-acyl-L-alpha-aminoacyl-tRNA + H2O = an N-acyl-L-amino acid + a tRNA + H(+). In terms of biological role, hydrolyzes ribosome-free peptidyl-tRNAs (with 1 or more amino acids incorporated), which drop off the ribosome during protein synthesis, or as a result of ribosome stalling. Its function is as follows. Catalyzes the release of premature peptidyl moieties from peptidyl-tRNA molecules trapped in stalled 50S ribosomal subunits, and thus maintains levels of free tRNAs and 50S ribosomes. The protein is Peptidyl-tRNA hydrolase of Legionella pneumophila subsp. pneumophila (strain Philadelphia 1 / ATCC 33152 / DSM 7513).